The following is a 467-amino-acid chain: UDP-N-acetylmuramate--L-alanine ligase (467 aa).

112–118 provides a ligand contact to ATP; the sequence is GTHGKTT.

This sequence belongs to the MurCDEF family.

The protein localises to the cytoplasm. It carries out the reaction UDP-N-acetyl-alpha-D-muramate + L-alanine + ATP = UDP-N-acetyl-alpha-D-muramoyl-L-alanine + ADP + phosphate + H(+). Its pathway is cell wall biogenesis; peptidoglycan biosynthesis. Functionally, cell wall formation. This chain is UDP-N-acetylmuramate--L-alanine ligase, found in Azoarcus sp. (strain BH72).